We begin with the raw amino-acid sequence, 666 residues long: Transketolase (666 aa).

A substrate-binding site is contributed by H26. Residues H66 and 114–116 (GPL) each bind thiamine diphosphate. Residue D155 coordinates Mg(2+). Residues G156 and N185 each coordinate thiamine diphosphate. Mg(2+)-binding residues include N185 and I187. Residues H261, R358, and S385 each coordinate substrate. Residue H261 participates in thiamine diphosphate binding. The active-site Proton donor is the E411. F437 serves as a coordination point for thiamine diphosphate. Substrate-binding residues include H461, D469, and R520.

Belongs to the transketolase family. As to quaternary structure, homodimer. Requires Mg(2+) as cofactor. It depends on Ca(2+) as a cofactor. The cofactor is Mn(2+). Co(2+) is required as a cofactor. Thiamine diphosphate serves as cofactor.

It catalyses the reaction D-sedoheptulose 7-phosphate + D-glyceraldehyde 3-phosphate = aldehydo-D-ribose 5-phosphate + D-xylulose 5-phosphate. In terms of biological role, catalyzes the transfer of a two-carbon ketol group from a ketose donor to an aldose acceptor, via a covalent intermediate with the cofactor thiamine pyrophosphate. This Buchnera aphidicola subsp. Baizongia pistaciae (strain Bp) protein is Transketolase (tkt).